We begin with the raw amino-acid sequence, 296 residues long: Phosphatidylglycerol--prolipoprotein diacylglyceryl transferase (296 aa).

The next 3 membrane-spanning stretches (helical) occupy residues 17 to 37 (LAVR…IVVG), 59 to 79 (MMFY…VLFY), and 97 to 117 (GGMS…LFAW). An a 1,2-diacyl-sn-glycero-3-phospho-(1'-sn-glycerol)-binding site is contributed by R142. Helical transmembrane passes span 230 to 250 (MGAV…TVEF) and 257 to 277 (FLGL…PMIL).

The protein belongs to the Lgt family.

It localises to the cell inner membrane. The enzyme catalyses L-cysteinyl-[prolipoprotein] + a 1,2-diacyl-sn-glycero-3-phospho-(1'-sn-glycerol) = an S-1,2-diacyl-sn-glyceryl-L-cysteinyl-[prolipoprotein] + sn-glycerol 1-phosphate + H(+). Its pathway is protein modification; lipoprotein biosynthesis (diacylglyceryl transfer). Functionally, catalyzes the transfer of the diacylglyceryl group from phosphatidylglycerol to the sulfhydryl group of the N-terminal cysteine of a prolipoprotein, the first step in the formation of mature lipoproteins. The polypeptide is Phosphatidylglycerol--prolipoprotein diacylglyceryl transferase (Burkholderia lata (strain ATCC 17760 / DSM 23089 / LMG 22485 / NCIMB 9086 / R18194 / 383)).